Reading from the N-terminus, the 465-residue chain is UDP-N-acetylmuramate--L-alanine ligase (465 aa).

112 to 118 contacts ATP; sequence GTHGKTT.

Belongs to the MurCDEF family.

It localises to the cytoplasm. The catalysed reaction is UDP-N-acetyl-alpha-D-muramate + L-alanine + ATP = UDP-N-acetyl-alpha-D-muramoyl-L-alanine + ADP + phosphate + H(+). Its pathway is cell wall biogenesis; peptidoglycan biosynthesis. Cell wall formation. This is UDP-N-acetylmuramate--L-alanine ligase from Burkholderia multivorans (strain ATCC 17616 / 249).